The chain runs to 446 residues: tRNA-2-methylthio-N(6)-dimethylallyladenosine synthase (446 aa).

The MTTase N-terminal domain occupies 3 to 120 (KKIYIKTFGC…LPEMLKQRRS (118 aa)). 6 residues coordinate [4Fe-4S] cluster: C12, C49, C83, C157, C161, and C164. One can recognise a Radical SAM core domain in the interval 143 to 375 (KVEGATAFVS…QAVIDQNTRR (233 aa)). In terms of domain architecture, TRAM spans 378–444 (DEMVGSVQRI…AYTLRGEIVV (67 aa)).

This sequence belongs to the methylthiotransferase family. MiaB subfamily. As to quaternary structure, monomer. It depends on [4Fe-4S] cluster as a cofactor.

The protein resides in the cytoplasm. It carries out the reaction N(6)-dimethylallyladenosine(37) in tRNA + (sulfur carrier)-SH + AH2 + 2 S-adenosyl-L-methionine = 2-methylsulfanyl-N(6)-dimethylallyladenosine(37) in tRNA + (sulfur carrier)-H + 5'-deoxyadenosine + L-methionine + A + S-adenosyl-L-homocysteine + 2 H(+). Catalyzes the methylthiolation of N6-(dimethylallyl)adenosine (i(6)A), leading to the formation of 2-methylthio-N6-(dimethylallyl)adenosine (ms(2)i(6)A) at position 37 in tRNAs that read codons beginning with uridine. The chain is tRNA-2-methylthio-N(6)-dimethylallyladenosine synthase from Herminiimonas arsenicoxydans.